Reading from the N-terminus, the 374-residue chain is MLHFLIRPSTRCAGSPHFNSTSSFLRKRLQSKTILSKRLGFQFRPSSTNVLAEVSTATSGFNPSWWPYALIQNTAYTINVYAGAPWWVSIILTTLGVRLALTPVMIASFRNSTKLSVIQPEMKKELEAIKTAKLDNDQLALNQHSIALRGIYLKHNVNPFAIFILPLTQSAVFFSFFYAIRKMSRLSVDGFTTGGLAWFKDLSIPDPYCILPIINAGLMFSGMQMNRANTASTIGNSTNWRTFFFLCCLLSPLLTAKLPAAIFMYWIPSSLFNIVQGYILKNPVVRSKLGFAPLPSIIEKQPSGFTLITNPIKSLKEFYKGVRDGFKTQYEQLQKDVSRRAVATTSASTIRPNSHYKKLKELNRSKKNSKKQSN.

A helical membrane pass occupies residues 77–97 (TINVYAGAPWWVSIILTTLGV). Over 98–159 (RLALTPVMIA…GIYLKHNVNP (62 aa)) the chain is Mitochondrial intermembrane. Residues 160-180 (FAIFILPLTQSAVFFSFFYAI) form a helical membrane-spanning segment. Over 181-242 (RKMSRLSVDG…TIGNSTNWRT (62 aa)) the chain is Mitochondrial matrix. A helical membrane pass occupies residues 243–263 (FFFLCCLLSPLLTAKLPAAIF). Topologically, residues 264–374 (MYWIPSSLFN…SKKNSKKQSN (111 aa)) are mitochondrial intermembrane.

It belongs to the OXA1/ALB3/YidC family.

The protein localises to the mitochondrion inner membrane. Required for the insertion of integral membrane proteins into the mitochondrial inner membrane. Essential for the activity and assembly of cytochrome c oxidase. Not essential for viability, while oxa102 is essential. When both genes are deleted the cell is non-viable, suggesting that oxa101 act as a back-up for oxa102. This is Mitochondrial inner membrane protein oxa1-1 (oxa101) from Schizosaccharomyces pombe (strain 972 / ATCC 24843) (Fission yeast).